A 30-amino-acid polypeptide reads, in one-letter code: Cyclotide cter-P (30 aa).

A cross-link (cyclopeptide (Gly-Asn)) is located at residues 1-30 (GIPCGESCVFIPCITAAIGCSCKSKVCYRN). Intrachain disulfides connect Cys4–Cys20, Cys8–Cys22, and Cys13–Cys27.

In terms of processing, this is a cyclic peptide.

It is found in the secreted. In terms of biological role, probably participates in a plant defense mechanism. This chain is Cyclotide cter-P, found in Clitoria ternatea (Butterfly pea).